The primary structure comprises 356 residues: GDSL esterase/lipase At2g36325 (356 aa).

The N-terminal stretch at 1 to 26 is a signal peptide; it reads MNITKLTPWFLFSCLILLSDYIKVNS. Asn25 is a glycosylation site (N-linked (GlcNAc...) asparagine). The active-site Nucleophile is the Ser54. Residues Asn165, Asn185, and Asn240 are each glycosylated (N-linked (GlcNAc...) asparagine). Catalysis depends on residues Asp334 and His337.

Belongs to the 'GDSL' lipolytic enzyme family.

The protein resides in the secreted. This Arabidopsis thaliana (Mouse-ear cress) protein is GDSL esterase/lipase At2g36325.